Here is a 130-residue protein sequence, read N- to C-terminus: MSEIRSELKYLSSHEWARVEEDGTVTIGITDHAQEALGDVVFVETPEVGSQVSAGEEAGVVESVKAASDIYSPVTGEVIAVNELLEEAPETVNESPYDEGWFFKVKPSDVSELDGAMDSEAYVKSVEDDS.

The Lipoyl-binding domain maps to 24–106 (TVTIGITDHA…YDEGWFFKVK (83 aa)). At Lys65 the chain carries N6-lipoyllysine.

It belongs to the GcvH family. As to quaternary structure, the glycine cleavage system is composed of four proteins: P, T, L and H. (R)-lipoate serves as cofactor.

Functionally, the glycine cleavage system catalyzes the degradation of glycine. The H protein shuttles the methylamine group of glycine from the P protein to the T protein. The polypeptide is Glycine cleavage system H protein (Teredinibacter turnerae (strain ATCC 39867 / T7901)).